The primary structure comprises 399 residues: Succinate--CoA ligase [ADP-forming] subunit beta (399 aa).

The region spanning 9–254 is the ATP-grasp domain; it reads KAVLAEFGAP…ESEEDPKEIE (246 aa). Residues Lys-46, 53-55, Glu-109, Ala-112, and Glu-117 each bind ATP; that span reads GRG. Positions 209 and 223 each coordinate Mg(2+). Residues Asn-274 and 331-333 contribute to the substrate site; that span reads GIM.

The protein belongs to the succinate/malate CoA ligase beta subunit family. Heterotetramer of two alpha and two beta subunits. Mg(2+) serves as cofactor.

The catalysed reaction is succinate + ATP + CoA = succinyl-CoA + ADP + phosphate. It carries out the reaction GTP + succinate + CoA = succinyl-CoA + GDP + phosphate. Its pathway is carbohydrate metabolism; tricarboxylic acid cycle; succinate from succinyl-CoA (ligase route): step 1/1. Its function is as follows. Succinyl-CoA synthetase functions in the citric acid cycle (TCA), coupling the hydrolysis of succinyl-CoA to the synthesis of either ATP or GTP and thus represents the only step of substrate-level phosphorylation in the TCA. The beta subunit provides nucleotide specificity of the enzyme and binds the substrate succinate, while the binding sites for coenzyme A and phosphate are found in the alpha subunit. The sequence is that of Succinate--CoA ligase [ADP-forming] subunit beta from Caulobacter vibrioides (strain NA1000 / CB15N) (Caulobacter crescentus).